The primary structure comprises 353 residues: Phospho-N-acetylmuramoyl-pentapeptide-transferase (353 aa).

10 helical membrane-spanning segments follow: residues 24 to 44, 66 to 86, 88 to 108, 129 to 149, 160 to 180, 192 to 212, 229 to 249, 256 to 276, 281 to 301, and 330 to 350; these read LGFFIAFFLTLFLMPKFILWA, TPTMGGIVFVFATIVASVLCA, LGNLYVLLGIIVLVGFSFVGF, FGMLFVLSLVVSVLLSLKGLD, PLFEMPTMLAVGFWVLVFLST, GLASVPSIFTLLSLSIFVYVA, VGELFVVSLALVGSLFGFLWY, VFMGDSGSLALGGFIAYNAIV, ILLVLMGSIFVVETLSVILQV, and KVIVRFWIISMLSNLVALLSL.

It belongs to the glycosyltransferase 4 family. MraY subfamily. Mg(2+) serves as cofactor.

It localises to the cell inner membrane. The enzyme catalyses UDP-N-acetyl-alpha-D-muramoyl-L-alanyl-gamma-D-glutamyl-meso-2,6-diaminopimeloyl-D-alanyl-D-alanine + di-trans,octa-cis-undecaprenyl phosphate = di-trans,octa-cis-undecaprenyl diphospho-N-acetyl-alpha-D-muramoyl-L-alanyl-D-glutamyl-meso-2,6-diaminopimeloyl-D-alanyl-D-alanine + UMP. Its pathway is cell wall biogenesis; peptidoglycan biosynthesis. Functionally, catalyzes the initial step of the lipid cycle reactions in the biosynthesis of the cell wall peptidoglycan: transfers peptidoglycan precursor phospho-MurNAc-pentapeptide from UDP-MurNAc-pentapeptide onto the lipid carrier undecaprenyl phosphate, yielding undecaprenyl-pyrophosphoryl-MurNAc-pentapeptide, known as lipid I. This Helicobacter pylori (strain HPAG1) protein is Phospho-N-acetylmuramoyl-pentapeptide-transferase.